Reading from the N-terminus, the 258-residue chain is Ubiquinone/menaquinone biosynthesis C-methyltransferase UbiE (258 aa).

The tract at residues 1 to 21 (MPESRTSADGGMETSYGFREV) is disordered. S-adenosyl-L-methionine is bound by residues Thr81, Asp102, and 130 to 131 (NA).

The protein belongs to the class I-like SAM-binding methyltransferase superfamily. MenG/UbiE family.

It catalyses the reaction a 2-demethylmenaquinol + S-adenosyl-L-methionine = a menaquinol + S-adenosyl-L-homocysteine + H(+). The catalysed reaction is a 2-methoxy-6-(all-trans-polyprenyl)benzene-1,4-diol + S-adenosyl-L-methionine = a 5-methoxy-2-methyl-3-(all-trans-polyprenyl)benzene-1,4-diol + S-adenosyl-L-homocysteine + H(+). The protein operates within quinol/quinone metabolism; menaquinone biosynthesis; menaquinol from 1,4-dihydroxy-2-naphthoate: step 2/2. Its pathway is cofactor biosynthesis; ubiquinone biosynthesis. Functionally, methyltransferase required for the conversion of demethylmenaquinol (DMKH2) to menaquinol (MKH2) and the conversion of 2-polyprenyl-6-methoxy-1,4-benzoquinol (DDMQH2) to 2-polyprenyl-3-methyl-6-methoxy-1,4-benzoquinol (DMQH2). In Rhizobium leguminosarum bv. trifolii (strain WSM2304), this protein is Ubiquinone/menaquinone biosynthesis C-methyltransferase UbiE.